Consider the following 348-residue polypeptide: Fructose-1,6-bisphosphatase (348 aa).

The Pro/N-degron signature appears at 2–5; sequence PTLV. At S12 the chain carries Phosphoserine. Residues 27–31 and 38–42 each bind AMP; these read IIEHQ and TGDFT. D79 and E108 together coordinate Mg(2+). Position 122 to 123 (122 to 123) interacts with AMP; the sequence is SY. Mg(2+) contacts are provided by D128, I130, and D131. Substrate is bound at residue 131–134; sequence DGSS. R150 is a binding site for AMP. Substrate contacts are provided by residues 222 to 225, 255 to 260, Y276, and 286 to 288; these read NEGN, RYVGSM, and KLR. Position 292 (E292) interacts with Mg(2+).

It belongs to the FBPase class 1 family. Homotetramer. Requires Mg(2+) as cofactor. Ubiquitinated. Targeted for proteasomal degradation when cells are shifted to glucose-containing growth medium.

It carries out the reaction beta-D-fructose 1,6-bisphosphate + H2O = beta-D-fructose 6-phosphate + phosphate. Its pathway is carbohydrate biosynthesis; gluconeogenesis. With respect to regulation, subject to complex allosteric regulation. The enzyme can assume an active R-state, or an inactive T-state. Intermediate conformations may exist. AMP acts as allosteric inhibitor. AMP binding affects the turnover of bound substrate and not the affinity for substrate. This chain is Fructose-1,6-bisphosphatase (FBP1), found in Saccharomyces cerevisiae (strain ATCC 204508 / S288c) (Baker's yeast).